The sequence spans 352 residues: Rhodopsin (352 aa).

At 1–36 the chain is on the extracellular side; it reads MNGTEGPFFYIPMVNTTGVVRSPYEYPQYYLVNPAA. Residues N2 and N15 are each glycosylated (N-linked (GlcNAc...) asparagine). Residues 37–61 form a helical membrane-spanning segment; sequence YACLGAYMFFLILVGFPVNFLTLYV. The Cytoplasmic portion of the chain corresponds to 62 to 73; it reads TLEHKKLRTPLN. The helical transmembrane segment at 74-96 threads the bilayer; that stretch reads YILLNLAVADLFMVFGGFTTTIY. Topologically, residues 97–110 are extracellular; the sequence is TSMHGYFVLGRLGC. C110 and C187 form a disulfide bridge. Residues 111-133 form a helical membrane-spanning segment; it reads NIEGFFATLGGEIALWSLVVLAI. A 'Ionic lock' involved in activated form stabilization motif is present at residues 134-136; it reads ERW. The Cytoplasmic portion of the chain corresponds to 134–152; sequence ERWVVVCKPISNFRFGENH. Residues 153 to 173 traverse the membrane as a helical segment; that stretch reads AIMGVAFTWFMASACAVPPLV. The Extracellular segment spans residues 174–202; the sequence is GWSRYIPEGMQCSCGIDYYTRAEGFNNES. N200 is a glycosylation site (N-linked (GlcNAc...) asparagine). Residues 203–224 form a helical membrane-spanning segment; that stretch reads FVIYMFTVHFCIPLAVVGFCYG. Over 225–252 the chain is Cytoplasmic; sequence RLLCAVKEAAAAQQESETTQRAEREVSR. The chain crosses the membrane as a helical span at residues 253–274; sequence MVVIMVIGFLVCWLPYASVAWY. At 275-286 the chain is on the extracellular side; it reads IFTHQGSEFGPL. Residues 287–308 traverse the membrane as a helical segment; the sequence is FMTIPAFFAKSSSIYNPMIYIC. At K296 the chain carries N6-(retinylidene)lysine. The Cytoplasmic segment spans residues 309–352; sequence MNKQFRHCMITTLCCGKNPFEEEEGASTTKTEASSVSSSSVSPA. Residues C322 and C323 are each lipidated (S-palmitoyl cysteine). Residues 331-352 form a disordered region; that stretch reads EEGASTTKTEASSVSSSSVSPA. The span at 342–352 shows a compositional bias: low complexity; sequence SSVSSSSVSPA.

This sequence belongs to the G-protein coupled receptor 1 family. Opsin subfamily. Phosphorylated on some or all of the serine and threonine residues present in the C-terminal region. Post-translationally, contains one covalently linked retinal chromophore.

The protein resides in the membrane. It is found in the cell projection. Its subcellular location is the cilium. It localises to the photoreceptor outer segment. Photoreceptor required for image-forming vision at low light intensity. While most salt water fish species use retinal as chromophore, most freshwater fish use 3-dehydroretinal, or a mixture of retinal and 3-dehydroretinal. Light-induced isomerization of 11-cis to all-trans retinal triggers a conformational change that activates signaling via G-proteins. Subsequent receptor phosphorylation mediates displacement of the bound G-protein alpha subunit by arrestin and terminates signaling. The polypeptide is Rhodopsin (rho) (Gobius niger (Black goby)).